The sequence spans 201 residues: dITP/XTP pyrophosphatase (201 aa).

8 to 13 (TTNENK) is a binding site for substrate. The active-site Proton acceptor is Asp68. Residue Asp68 coordinates Mg(2+). Residues Ser69, 155 to 158 (FGYD), Lys177, and 182 to 183 (HR) contribute to the substrate site.

This sequence belongs to the HAM1 NTPase family. Homodimer. Mg(2+) serves as cofactor.

It carries out the reaction XTP + H2O = XMP + diphosphate + H(+). The catalysed reaction is dITP + H2O = dIMP + diphosphate + H(+). The enzyme catalyses ITP + H2O = IMP + diphosphate + H(+). Its function is as follows. Pyrophosphatase that catalyzes the hydrolysis of nucleoside triphosphates to their monophosphate derivatives, with a high preference for the non-canonical purine nucleotides XTP (xanthosine triphosphate), dITP (deoxyinosine triphosphate) and ITP. Seems to function as a house-cleaning enzyme that removes non-canonical purine nucleotides from the nucleotide pool, thus preventing their incorporation into DNA/RNA and avoiding chromosomal lesions. The protein is dITP/XTP pyrophosphatase of Borreliella burgdorferi (strain ATCC 35210 / DSM 4680 / CIP 102532 / B31) (Borrelia burgdorferi).